Consider the following 229-residue polypeptide: Large ribosomal subunit protein uL1 (229 aa).

This sequence belongs to the universal ribosomal protein uL1 family. As to quaternary structure, part of the 50S ribosomal subunit.

In terms of biological role, binds directly to 23S rRNA. The L1 stalk is quite mobile in the ribosome, and is involved in E site tRNA release. Its function is as follows. Protein L1 is also a translational repressor protein, it controls the translation of the L11 operon by binding to its mRNA. The chain is Large ribosomal subunit protein uL1 from Actinobacillus pleuropneumoniae serotype 3 (strain JL03).